A 127-amino-acid chain; its full sequence is S-adenosylmethionine decarboxylase proenzyme (127 aa).

Catalysis depends on Ser63, which acts as the Schiff-base intermediate with substrate; via pyruvic acid. Position 63 is a pyruvic acid (Ser); by autocatalysis (Ser63). His68 serves as the catalytic Proton acceptor; for processing activity. Residue Cys83 is the Proton donor; for catalytic activity of the active site.

This sequence belongs to the prokaryotic AdoMetDC family. Type 1 subfamily. As to quaternary structure, heterotetramer of two alpha and two beta chains arranged as a dimer of alpha/beta heterodimers. The cofactor is pyruvate. Is synthesized initially as an inactive proenzyme. Formation of the active enzyme involves a self-maturation process in which the active site pyruvoyl group is generated from an internal serine residue via an autocatalytic post-translational modification. Two non-identical subunits are generated from the proenzyme in this reaction, and the pyruvate is formed at the N-terminus of the alpha chain, which is derived from the carboxyl end of the proenzyme. The post-translation cleavage follows an unusual pathway, termed non-hydrolytic serinolysis, in which the side chain hydroxyl group of the serine supplies its oxygen atom to form the C-terminus of the beta chain, while the remainder of the serine residue undergoes an oxidative deamination to produce ammonia and the pyruvoyl group blocking the N-terminus of the alpha chain.

The enzyme catalyses S-adenosyl-L-methionine + H(+) = S-adenosyl 3-(methylsulfanyl)propylamine + CO2. It participates in amine and polyamine biosynthesis; S-adenosylmethioninamine biosynthesis; S-adenosylmethioninamine from S-adenosyl-L-methionine: step 1/1. Catalyzes the decarboxylation of S-adenosylmethionine to S-adenosylmethioninamine (dcAdoMet), the propylamine donor required for the synthesis of the polyamines spermine and spermidine from the diamine putrescine. The sequence is that of S-adenosylmethionine decarboxylase proenzyme from Carboxydothermus hydrogenoformans (strain ATCC BAA-161 / DSM 6008 / Z-2901).